The chain runs to 663 residues: UvrABC system protein B (663 aa).

Residues 30-417 (EGIKAGKRHQ…TDKMVEQIIR (388 aa)) enclose the Helicase ATP-binding domain. 43 to 50 (GATGTGKT) contributes to the ATP binding site. The Beta-hairpin signature appears at 96–119 (YYDYYQPEAYVPSTDTFIEKDASI). The Helicase C-terminal domain maps to 434 to 600 (QIDDLLSEIQ…TINKKIHDLI (167 aa)). The UVR domain occupies 627-662 (QKTIDNIEKEMKQAAKDLDFEKATELRDMLFELKAE).

It belongs to the UvrB family. As to quaternary structure, forms a heterotetramer with UvrA during the search for lesions. Interacts with UvrC in an incision complex.

It is found in the cytoplasm. The UvrABC repair system catalyzes the recognition and processing of DNA lesions. A damage recognition complex composed of 2 UvrA and 2 UvrB subunits scans DNA for abnormalities. Upon binding of the UvrA(2)B(2) complex to a putative damaged site, the DNA wraps around one UvrB monomer. DNA wrap is dependent on ATP binding by UvrB and probably causes local melting of the DNA helix, facilitating insertion of UvrB beta-hairpin between the DNA strands. Then UvrB probes one DNA strand for the presence of a lesion. If a lesion is found the UvrA subunits dissociate and the UvrB-DNA preincision complex is formed. This complex is subsequently bound by UvrC and the second UvrB is released. If no lesion is found, the DNA wraps around the other UvrB subunit that will check the other stand for damage. This is UvrABC system protein B from Staphylococcus aureus (strain COL).